Consider the following 220-residue polypeptide: Orotidine 5'-phosphate decarboxylase (220 aa).

Substrate-binding positions include Asp12, Lys34, 60–69 (DFKVADIPNT), Ser117, 170–180 (PGVGAQGGKAS), Gly193, and Arg194. Lys62 (proton donor) is an active-site residue.

Belongs to the OMP decarboxylase family. Type 1 subfamily. Homodimer.

The catalysed reaction is orotidine 5'-phosphate + H(+) = UMP + CO2. It functions in the pathway pyrimidine metabolism; UMP biosynthesis via de novo pathway; UMP from orotate: step 2/2. In terms of biological role, catalyzes the decarboxylation of orotidine 5'-monophosphate (OMP) to uridine 5'-monophosphate (UMP). In Methanosarcina mazei (strain ATCC BAA-159 / DSM 3647 / Goe1 / Go1 / JCM 11833 / OCM 88) (Methanosarcina frisia), this protein is Orotidine 5'-phosphate decarboxylase.